We begin with the raw amino-acid sequence, 172 residues long: MVDKRESYTKEDLLASGRGELFGAKGPQLPAPNMLMMDRVVKMTETGGNFDKGYVEAELDINPDLWFFGCHFIGDPVMPGCLGLDAMWQLVGFYLGWLGSEGKGRALGVGEVKFTGQVLPTAKKVTYRIHFKRIVNRRLIMGLADGEVLVDGRLIYTASDLKVGLFQDTSAF.

The active site involves His71.

Belongs to the thioester dehydratase family. FabA subfamily. As to quaternary structure, homodimer.

The protein resides in the cytoplasm. The catalysed reaction is a (3R)-hydroxyacyl-[ACP] = a (2E)-enoyl-[ACP] + H2O. It catalyses the reaction (3R)-hydroxydecanoyl-[ACP] = (2E)-decenoyl-[ACP] + H2O. The enzyme catalyses (2E)-decenoyl-[ACP] = (3Z)-decenoyl-[ACP]. It functions in the pathway lipid metabolism; fatty acid biosynthesis. Functionally, necessary for the introduction of cis unsaturation into fatty acids. Catalyzes the dehydration of (3R)-3-hydroxydecanoyl-ACP to E-(2)-decenoyl-ACP and then its isomerization to Z-(3)-decenoyl-ACP. Can catalyze the dehydratase reaction for beta-hydroxyacyl-ACPs with saturated chain lengths up to 16:0, being most active on intermediate chain length. The sequence is that of 3-hydroxydecanoyl-[acyl-carrier-protein] dehydratase from Escherichia coli (strain 55989 / EAEC).